The following is a 540-amino-acid chain: Phosphatidylinositol 4-phosphate 5-kinase type-1 beta (540 aa).

Positions 1–21 are disordered; that stretch reads MSSAAENGEAAPGKQNEEKTY. The 371-residue stretch at 25 to 395 folds into the PIPK domain; the sequence is ASSAIKGAIQ…RFLKFMNSRV (371 aa). Residues S445, S447, and S448 each carry the phosphoserine modification.

In terms of assembly, interacts with RAC1, AJUBA, PLD1, PLD2 and ARF1. As to expression, detected in heart, pancreas, brain, kidney, skeletal muscle and lung.

Its subcellular location is the cytoplasm. The protein localises to the cytosol. It localises to the cell membrane. It is found in the endomembrane system. It catalyses the reaction a 1,2-diacyl-sn-glycero-3-phospho-(1D-myo-inositol 4-phosphate) + ATP = a 1,2-diacyl-sn-glycero-3-phospho-(1D-myo-inositol-4,5-bisphosphate) + ADP + H(+). The enzyme catalyses 1-octadecanoyl-2-(5Z,8Z,11Z,14Z)-eicosatetraenoyl-sn-glycero-3-phospho-1D-myo-inositol 4-phosphate + ATP = 1-octadecanoyl-2-(5Z,8Z,11Z,14Z)-eicosatetraenoyl-sn-glycero-3-phospho-1D-myo-inositol 4,5-bisphosphate + ADP + H(+). It carries out the reaction 1-octadecanoyl-2-(9Z)-octadecenoyl-sn-glycero-3-phospho-1D-myo-inositol 4-phosphate + ATP = 1-octadecanoyl-2-(9Z)-octadecenoyl-sn-glycero-3-phospho-1D-myo-inositol 4,5-bisphosphate + ADP + H(+). The catalysed reaction is 1-octadecanoyl-2-(9Z)-octadecenoyl-sn-glycero-3-phospho-1D-myo-inositol + ATP = 1-octadecanoyl-2-(9Z)-octadecenoyl-sn-glycero-3-phospho-1D-myo-inositol 5-phosphate + ADP + H(+). It catalyses the reaction 1-octadecanoyl-2-(9Z,12Z)-octadecadienoyl-sn-glycero-3-phospho-1D-myo-inositol + ATP = 1-octadecanoyl-2-(9Z,12Z)-octadecadienoyl-sn-glycero-3-phospho-1D-myo-inositol 5-phosphate + ADP + H(+). The enzyme catalyses 1-octadecanoyl-2-(5Z,8Z,11Z,14Z-eicosatetraenoyl)-sn-glycero-3-phospho-(1D-myo-inositol) + ATP = 1-octadecanoyl-2-(5Z,8Z,11Z,14Z)-eicosatetraenoyl-sn-glycero-3-phospho-1D-myo-inositol 5-phosphate + ADP + H(+). It carries out the reaction 1,2-di-(9Z,12Z)-octadecadienoyl-sn-glycero-3-phospho-1D-myo-inositol + ATP = 1,2-di(9Z,12Z)-octadecadienoyl-sn-glycero-3-phospho-1D-myo-inositol 5-phosphate + ADP + H(+). Functionally, catalyzes the phosphorylation of phosphatidylinositol 4-phosphate (PtdIns(4)P/PI4P) to form phosphatidylinositol 4,5-bisphosphate (PtdIns(4,5)P2/PIP2), a lipid second messenger that regulates several cellular processes such as signal transduction, vesicle trafficking, actin cytoskeleton dynamics, cell adhesion, and cell motility. PtdIns(4,5)P2 can directly act as a second messenger or can be utilized as a precursor to generate other second messengers: inositol 1,4,5-trisphosphate (IP3), diacylglycerol (DAG) or phosphatidylinositol-3,4,5-trisphosphate (PtdIns(3,4,5)P3/PIP3). Mediates RAC1-dependent reorganization of actin filaments. Contributes to the activation of phospholipase PLD2. Together with PIP5K1A, is required, after stimulation by G-protein coupled receptors, for the synthesis of IP3 that will induce stable platelet adhesion. The sequence is that of Phosphatidylinositol 4-phosphate 5-kinase type-1 beta from Homo sapiens (Human).